The sequence spans 205 residues: MMNNKLLLLVIALLCIASNSIVESFSFKVSAKVEECIYEEIGVDLSFTAMFQVIQGGFNDIDFTIISPDKRIVYSGQRESEGTKTLRSSFAGVYSFCFSNKMSSLTDKTVSFILSVGESSPIREIAKKKDLTPIERSIMTLSDGVIAVKNEQNYFKMREAAHRNTAESTNSRVLWWSVFEAFVLIALSIWQIYYLRRFFEVKRAV.

The signal sequence occupies residues 1–24; it reads MMNNKLLLLVIALLCIASNSIVES. Over 25–172 the chain is Lumenal; that stretch reads FSFKVSAKVE…RNTAESTNSR (148 aa). The region spanning 34–116 is the GOLD domain; it reads EECIYEEIGV…DKTVSFILSV (83 aa). A helical membrane pass occupies residues 173 to 193; sequence VLWWSVFEAFVLIALSIWQIY. Residues 194-205 lie on the Cytoplasmic side of the membrane; the sequence is YLRRFFEVKRAV.

It belongs to the EMP24/GP25L family.

The protein resides in the cytoplasmic vesicle membrane. Could have a role in the budding of coatomer-coated and other species of coated vesicles. The chain is Transmembrane emp24 domain-containing protein A (empA) from Dictyostelium discoideum (Social amoeba).